Consider the following 273-residue polypeptide: ComE operon protein 4 (273 aa).

Belongs to the pyrroline-5-carboxylate reductase family.

Dispensable for transformability. Not known if it can act as a pyrroline-5-carboxylate reductase. This is ComE operon protein 4 (comER) from Bacillus subtilis (strain 168).